The sequence spans 1377 residues: Dicer-like protein 2 (1377 aa).

A Helicase ATP-binding domain is found at 23-203 (MFEASLQENI…LSMIESNMNA (181 aa)). 36–43 (MDTGSGKT) provides a ligand contact to ATP. The DEAH box motif lies at 144 to 147 (DEAH). The Helicase C-terminal domain occupies 367–544 (KLEALISFLS…ALALETMAEV (178 aa)). The region spanning 563–657 (AVARLHHFCS…LPLTRKPELR (95 aa)) is the Dicer dsRNA-binding fold domain. 2 consecutive RNase III domains span residues 916 to 1056 (ATRL…MDGG) and 1090 to 1274 (NDSL…VDSR). 3 residues coordinate Mg(2+): Glu-1129, Asp-1260, and Glu-1263.

Belongs to the helicase family. Dicer subfamily. Mg(2+) is required as a cofactor. It depends on Mn(2+) as a cofactor.

In terms of biological role, dicer-like endonuclease involved in cleaving double-stranded RNA in the RNA interference (RNAi) pathway. Produces 21 to 25 bp dsRNAs (siRNAs) which target the selective destruction of homologous RNAs leading to sequence-specific suppression of gene expression, called post-transcriptional gene silencing (PTGS). Part of a broad host defense response against viral infection and transposons. The chain is Dicer-like protein 2 (dcl2) from Aspergillus terreus (strain NIH 2624 / FGSC A1156).